The sequence spans 176 residues: MKFVSDLLSVILFFATYTVTKNMIAATAVALVAGVVQAAFLYWKYKKLDTMQWVGLVLIVVFGGATIVLGDSRFIMWKPSVLFWLGALFLWGSHLAGKNGLKASIGREIQLPDAVWAKLTYMWVGFLIFMGIANWFVFTRFESQWVNYKMFGSTALMLVFFIIQGIYLSTCLKKED.

5 helical membrane-spanning segments follow: residues 23–43 (MIAA…FLYW), 50–70 (TMQW…IVLG), 74–94 (FIMW…WGSH), 119–139 (LTYM…FVFT), and 150–170 (MFGS…YLST).

It belongs to the YciB family.

It localises to the cell inner membrane. Its function is as follows. Plays a role in cell envelope biogenesis, maintenance of cell envelope integrity and membrane homeostasis. The protein is Inner membrane-spanning protein YciB of Neisseria meningitidis serogroup A / serotype 4A (strain DSM 15465 / Z2491).